A 46-amino-acid polypeptide reads, in one-letter code: uncharacterized protein (46 aa).

The protein resides in the plastid. Its subcellular location is the chloroplast. This is an uncharacterized protein from Trieres chinensis (Marine centric diatom).